The chain runs to 1225 residues: DNA-directed RNA polymerase subunit beta' (1225 aa).

Zn(2+) is bound by residues Cys60, Cys62, Cys75, and Cys78. Residues Asp450, Asp452, and Asp454 each coordinate Mg(2+). Residues Cys818, Cys892, Cys899, and Cys902 each coordinate Zn(2+).

This sequence belongs to the RNA polymerase beta' chain family. In terms of assembly, the RNAP catalytic core consists of 2 alpha, 1 beta, 1 beta' and 1 omega subunit. When a sigma factor is associated with the core the holoenzyme is formed, which can initiate transcription. It depends on Mg(2+) as a cofactor. The cofactor is Zn(2+).

The catalysed reaction is RNA(n) + a ribonucleoside 5'-triphosphate = RNA(n+1) + diphosphate. In terms of biological role, DNA-dependent RNA polymerase catalyzes the transcription of DNA into RNA using the four ribonucleoside triphosphates as substrates. This Streptococcus pneumoniae serotype 19F (strain G54) protein is DNA-directed RNA polymerase subunit beta'.